The following is a 230-amino-acid chain: Ribosome maturation factor RimM (230 aa).

A PRC barrel domain is found at 149–230 (ADEFYWVDLI…RVVVDWEADY (82 aa)).

It belongs to the RimM family. As to quaternary structure, binds ribosomal protein uS19.

It localises to the cytoplasm. Its function is as follows. An accessory protein needed during the final step in the assembly of 30S ribosomal subunit, possibly for assembly of the head region. Essential for efficient processing of 16S rRNA. May be needed both before and after RbfA during the maturation of 16S rRNA. It has affinity for free ribosomal 30S subunits but not for 70S ribosomes. The chain is Ribosome maturation factor RimM from Burkholderia mallei (strain NCTC 10229).